A 905-amino-acid polypeptide reads, in one-letter code: Lateral signaling target protein 2 homolog (905 aa).

A Glycyl lysine isopeptide (Lys-Gly) (interchain with G-Cter in ubiquitin) cross-link involves residue lysine 87. A Phosphoserine modification is found at serine 334. The disordered stretch occupies residues 354–441 (DEMSSLLSPP…RGQDGQSGEV (88 aa)). Polar residues-rich tracts occupy residues 358-367 (SLLSPPSACQ) and 418-437 (PGNT…QDGQ). Phosphothreonine is present on threonine 512. Disordered regions lie at residues 516-552 (NPKS…DNSH) and 589-691 (PGSV…RGDV). Composition is skewed to basic and acidic residues over residues 542-552 (PRAEGTGDNSH) and 605-615 (GGDKEPERIDE). The span at 647-656 (SGPQVDTASR) shows a compositional bias: polar residues. Residues 659–678 (GEGEVKGQPEPEARKQDPEK) are compositionally biased toward basic and acidic residues. Residues 835–895 (DEACGFCTSC…VCTHCYMFHV (61 aa)) form an FYVE-type zinc finger. Zn(2+) is bound by residues cysteine 841, cysteine 844, cysteine 857, cysteine 860, cysteine 865, cysteine 868, and cysteine 887. Residue threonine 888 is modified to Phosphothreonine; by MAP2K. Cysteine 890 lines the Zn(2+) pocket.

Belongs to the lst-2 family. In terms of assembly, interacts with TRIM3. Monoubiquitination at Lys-87 prevents binding to phosphatidylinositol 3-phosphate (PI3P) and localization to early endosome membranes. As to expression, enriched in brain (at protein level).

The protein resides in the cytoplasm. It is found in the cytosol. It localises to the early endosome membrane. Negative regulator of epidermal growth factor receptor (EGFR) signaling. Acts by promoting EGFR degradation in endosomes when not monoubiquitinated. The sequence is that of Lateral signaling target protein 2 homolog (Zfyve28) from Mus musculus (Mouse).